Here is a 206-residue protein sequence, read N- to C-terminus: Guanylate kinase (206 aa).

The Guanylate kinase-like domain maps to 7–185 (GLLIVISGPS…AVEKIRAIII (179 aa)). Residue 14–21 (GPSGAGKG) participates in ATP binding.

Belongs to the guanylate kinase family.

The protein localises to the cytoplasm. The catalysed reaction is GMP + ATP = GDP + ADP. Essential for recycling GMP and indirectly, cGMP. The protein is Guanylate kinase of Caldanaerobacter subterraneus subsp. tengcongensis (strain DSM 15242 / JCM 11007 / NBRC 100824 / MB4) (Thermoanaerobacter tengcongensis).